The sequence spans 290 residues: tRNA pseudouridine synthase A (290 aa).

The active-site Nucleophile is Asp56. Tyr109 is a substrate binding site.

The protein belongs to the tRNA pseudouridine synthase TruA family.

The enzyme catalyses uridine(38/39/40) in tRNA = pseudouridine(38/39/40) in tRNA. Functionally, formation of pseudouridine at positions 38, 39 and 40 in the anticodon stem and loop of transfer RNAs. This chain is tRNA pseudouridine synthase A, found in Methanobrevibacter smithii (strain ATCC 35061 / DSM 861 / OCM 144 / PS).